The following is a 154-amino-acid chain: Xanthine-guanine phosphoribosyltransferase (154 aa).

5-phospho-alpha-D-ribose 1-diphosphate is bound by residues 37–38 (RG), Arg-69, and 88–96 (EDLVDSGDT). Residue Arg-69 coordinates GMP. Asp-89 contacts Mg(2+). Guanine is bound by residues Asp-92 and Ile-135. The xanthine site is built by Asp-92 and Ile-135. Residues 92–96 (DSGDT) and 134–135 (WI) each bind GMP.

This sequence belongs to the purine/pyrimidine phosphoribosyltransferase family. XGPT subfamily. In terms of assembly, homotetramer. Requires Mg(2+) as cofactor.

The protein localises to the cell inner membrane. The enzyme catalyses GMP + diphosphate = guanine + 5-phospho-alpha-D-ribose 1-diphosphate. It carries out the reaction XMP + diphosphate = xanthine + 5-phospho-alpha-D-ribose 1-diphosphate. It catalyses the reaction IMP + diphosphate = hypoxanthine + 5-phospho-alpha-D-ribose 1-diphosphate. It functions in the pathway purine metabolism; GMP biosynthesis via salvage pathway; GMP from guanine: step 1/1. It participates in purine metabolism; XMP biosynthesis via salvage pathway; XMP from xanthine: step 1/1. Purine salvage pathway enzyme that catalyzes the transfer of the ribosyl-5-phosphate group from 5-phospho-alpha-D-ribose 1-diphosphate (PRPP) to the N9 position of the 6-oxopurines guanine and xanthine to form the corresponding ribonucleotides GMP (guanosine 5'-monophosphate) and XMP (xanthosine 5'-monophosphate), with the release of PPi. To a lesser extent, also acts on hypoxanthine. This is Xanthine-guanine phosphoribosyltransferase from Vibrio vulnificus (strain CMCP6).